The primary structure comprises 249 residues: Triosephosphate isomerase (249 aa).

9-11 (NWK) lines the substrate pocket. The active-site Electrophile is His-94. Glu-166 serves as the catalytic Proton acceptor. Residues Gly-172, Ser-214, and 235 to 236 (GG) contribute to the substrate site.

The protein belongs to the triosephosphate isomerase family. Homodimer.

The protein localises to the cytoplasm. It carries out the reaction D-glyceraldehyde 3-phosphate = dihydroxyacetone phosphate. The protein operates within carbohydrate biosynthesis; gluconeogenesis. It participates in carbohydrate degradation; glycolysis; D-glyceraldehyde 3-phosphate from glycerone phosphate: step 1/1. Functionally, involved in the gluconeogenesis. Catalyzes stereospecifically the conversion of dihydroxyacetone phosphate (DHAP) to D-glyceraldehyde-3-phosphate (G3P). The chain is Triosephosphate isomerase from Leptospira biflexa serovar Patoc (strain Patoc 1 / Ames).